We begin with the raw amino-acid sequence, 154 residues long: Ascorbate-specific PTS system EIIA component (154 aa).

The 145-residue stretch at Ser6 to Thr150 folds into the PTS EIIA type-2 domain. The Tele-phosphohistidine intermediate role is filled by His68. His68 is subject to Phosphohistidine.

It is found in the cytoplasm. The phosphoenolpyruvate-dependent sugar phosphotransferase system (sugar PTS), a major carbohydrate active transport system, catalyzes the phosphorylation of incoming sugar substrates concomitantly with their translocation across the cell membrane. The enzyme II UlaABC PTS system is involved in ascorbate transport. The protein is Ascorbate-specific PTS system EIIA component (ulaC) of Shigella dysenteriae serotype 1 (strain Sd197).